A 553-amino-acid polypeptide reads, in one-letter code: Methyl-coenzyme M reductase I subunit alpha (553 aa).

A coenzyme F430-binding site is contributed by glutamine 150. Residues arginine 228, 259–260, and arginine 273 each bind coenzyme B; that span reads KH. A 5-methylarginine modification is found at arginine 274. Tyrosine 335 and tyrosine 447 together coordinate coenzyme M.

This sequence belongs to the methyl-coenzyme M reductase alpha subunit family. MCR is a hexamer of two alpha, two beta, and two gamma chains, forming a dimer of heterotrimers. The cofactor is coenzyme F430. In terms of processing, is methylated on C5 of Arg-274 by the methyltransferase MJ0841. This post-translational methylation, despite being not essential in vivo, plays a role for the stability and structural integrity of MCR.

The protein resides in the cytoplasm. It carries out the reaction coenzyme B + methyl-coenzyme M = methane + coenzyme M-coenzyme B heterodisulfide. The protein operates within one-carbon metabolism; methyl-coenzyme M reduction; methane from methyl-coenzyme M: step 1/1. Its function is as follows. Component of the methyl-coenzyme M reductase (MCR) I that catalyzes the reductive cleavage of methyl-coenzyme M (CoM-S-CH3 or 2-(methylthio)ethanesulfonate) using coenzyme B (CoB or 7-mercaptoheptanoylthreonine phosphate) as reductant which results in the production of methane and the mixed heterodisulfide of CoB and CoM (CoM-S-S-CoB). This is the final step in methanogenesis. The protein is Methyl-coenzyme M reductase I subunit alpha (mcrA) of Methanocaldococcus jannaschii (strain ATCC 43067 / DSM 2661 / JAL-1 / JCM 10045 / NBRC 100440) (Methanococcus jannaschii).